We begin with the raw amino-acid sequence, 105 residues long: Large ribosomal subunit protein uL23 (105 aa).

The protein belongs to the universal ribosomal protein uL23 family. In terms of assembly, part of the 50S ribosomal subunit. Contacts protein L29, and trigger factor when it is bound to the ribosome.

One of the early assembly proteins it binds 23S rRNA. One of the proteins that surrounds the polypeptide exit tunnel on the outside of the ribosome. Forms the main docking site for trigger factor binding to the ribosome. The polypeptide is Large ribosomal subunit protein uL23 (Ureaplasma urealyticum serovar 10 (strain ATCC 33699 / Western)).